We begin with the raw amino-acid sequence, 377 residues long: Carbamoyl phosphate synthase small chain (377 aa).

The interval 1–186 (MSTPALLVLA…LGKGFVTPDE (186 aa)) is CPSase. Residues S47, G238, and G240 each coordinate L-glutamine. The 188-residue stretch at 190-377 (HVVAYDFGVK…IGNMKAAKRA (188 aa)) folds into the Glutamine amidotransferase type-1 domain. Residue C266 is the Nucleophile of the active site. L-glutamine contacts are provided by L267, Q270, N308, G310, and F311. Catalysis depends on residues H350 and E352.

This sequence belongs to the CarA family. In terms of assembly, composed of two chains; the small (or glutamine) chain promotes the hydrolysis of glutamine to ammonia, which is used by the large (or ammonia) chain to synthesize carbamoyl phosphate. Tetramer of heterodimers (alpha,beta)4.

The catalysed reaction is hydrogencarbonate + L-glutamine + 2 ATP + H2O = carbamoyl phosphate + L-glutamate + 2 ADP + phosphate + 2 H(+). It catalyses the reaction L-glutamine + H2O = L-glutamate + NH4(+). It participates in amino-acid biosynthesis; L-arginine biosynthesis; carbamoyl phosphate from bicarbonate: step 1/1. The protein operates within pyrimidine metabolism; UMP biosynthesis via de novo pathway; (S)-dihydroorotate from bicarbonate: step 1/3. Small subunit of the glutamine-dependent carbamoyl phosphate synthetase (CPSase). CPSase catalyzes the formation of carbamoyl phosphate from the ammonia moiety of glutamine, carbonate, and phosphate donated by ATP, constituting the first step of 2 biosynthetic pathways, one leading to arginine and/or urea and the other to pyrimidine nucleotides. The small subunit (glutamine amidotransferase) binds and cleaves glutamine to supply the large subunit with the substrate ammonia. This is Carbamoyl phosphate synthase small chain from Neisseria meningitidis serogroup B (strain ATCC BAA-335 / MC58).